The sequence spans 139 residues: Nucleoside diphosphate kinase (139 aa).

Residues lysine 10, phenylalanine 58, arginine 86, threonine 92, arginine 103, and asparagine 113 each coordinate ATP. Histidine 116 (pros-phosphohistidine intermediate) is an active-site residue.

It belongs to the NDK family. Homotetramer. The cofactor is Mg(2+).

Its subcellular location is the cytoplasm. The enzyme catalyses a 2'-deoxyribonucleoside 5'-diphosphate + ATP = a 2'-deoxyribonucleoside 5'-triphosphate + ADP. It catalyses the reaction a ribonucleoside 5'-diphosphate + ATP = a ribonucleoside 5'-triphosphate + ADP. Major role in the synthesis of nucleoside triphosphates other than ATP. The ATP gamma phosphate is transferred to the NDP beta phosphate via a ping-pong mechanism, using a phosphorylated active-site intermediate. The sequence is that of Nucleoside diphosphate kinase from Caulobacter sp. (strain K31).